The chain runs to 316 residues: Methionyl-tRNA formyltransferase (316 aa).

109–112 (SLLP) serves as a coordination point for (6S)-5,6,7,8-tetrahydrofolate.

This sequence belongs to the Fmt family.

It catalyses the reaction L-methionyl-tRNA(fMet) + (6R)-10-formyltetrahydrofolate = N-formyl-L-methionyl-tRNA(fMet) + (6S)-5,6,7,8-tetrahydrofolate + H(+). Attaches a formyl group to the free amino group of methionyl-tRNA(fMet). The formyl group appears to play a dual role in the initiator identity of N-formylmethionyl-tRNA by promoting its recognition by IF2 and preventing the misappropriation of this tRNA by the elongation apparatus. The chain is Methionyl-tRNA formyltransferase from Nitrosomonas eutropha (strain DSM 101675 / C91 / Nm57).